Reading from the N-terminus, the 2188-residue chain is Genome polyprotein (2188 aa).

Gly-2 carries the N-myristoyl glycine; by host lipid modification. Over 2–1503 the chain is Cytoplasmic; the sequence is GAQVTRQQTG…HISRAFITLQ (1502 aa). Residues Asp-408, Arg-412, Pro-548, Asp-549, Ile-550, Arg-834, Pro-838, and Asn-839 each coordinate N-acetylneuraminate. Active-site for protease 2A activity residues include His-879 and Asp-897. Positions 914 and 916 each coordinate Zn(2+). The active-site For protease 2A activity is the Cys-968. The Zn(2+) site is built by Cys-974 and His-976. Residues 1108–1180 form a membrane-binding region; it reads SESWLKKFTE…EHSCPTTERQ (73 aa). Residues 1108 to 1246 form an oligomerization region; that stretch reads SESWLKKFTE…SPGTGKSVAS (139 aa). The tract at residues 1129–1133 is RNA-binding; it reads SQKID. An SF3 helicase domain is found at 1212–1370; that stretch reads EKKINNYIQF…YKDSNKLDMS (159 aa). Position 1236–1243 (1236–1243) interacts with ATP; that stretch reads GSPGTGKS. Residues Cys-1376, Cys-1389, and Cys-1394 each coordinate Zn(2+). The C4-type; degenerate zinc finger occupies 1376 to 1394; that stretch reads CKPDNCTPTNYKRCCPLIC. An RNA-binding region spans residues 1421 to 1428; the sequence is EYRTRNST. An oligomerization region spans residues 1432–1437; it reads LEALFQ. The stretch at 1504–1519 is an intramembrane region; the sequence is AIATFVSIAGVVYVIY. The Cytoplasmic portion of the chain corresponds to 1520–2188; it reads KLFAGIQGPY…SLRRKWLDSF (669 aa). An O-(5'-phospho-RNA)-tyrosine modification is found at Tyr-1529. One can recognise a Peptidase C3 domain in the interval 1549–1727; the sequence is GPGFDFAQAI…FAAMLLHSYF (179 aa). Residues His-1588, Glu-1619, and Cys-1695 each act as for protease 3C activity in the active site. The RdRp catalytic domain occupies 1954–2069; sequence GEIFAFDYTG…SYPHKIDPGL (116 aa). The Mg(2+) site is built by Asp-1960 and Asp-2055.

The protein belongs to the picornaviruses polyprotein family. As to quaternary structure, interacts with capsid protein VP1 and capsid protein VP3 to form heterotrimeric protomers. In terms of assembly, interacts with capsid protein VP0, and capsid protein VP3 to form heterotrimeric protomers. Five protomers subsequently associate to form pentamers which serve as building blocks for the capsid. Interacts with capsid protein VP2, capsid protein VP3 and capsid protein VP4 following cleavage of capsid protein VP0. Interacts with capsid protein VP1 and capsid protein VP3 in the mature capsid. As to quaternary structure, interacts with capsid protein VP0 and capsid protein VP1 to form heterotrimeric protomers. Five protomers subsequently associate to form pentamers which serve as building blocks for the capsid. Interacts with capsid protein VP4 in the mature capsid. Interacts with protein 2C; this interaction may be important for virion morphogenesis. Interacts with host IRF7. In terms of assembly, interacts with capsid protein VP1 and capsid protein VP3. Homodimer. As to quaternary structure, homohexamer; forms a hexameric ring structure with 6-fold symmetry characteristic of AAA+ ATPases. Interacts (via N-terminus) with host RTN3 (via reticulon domain); this interaction is important for viral replication. Interacts with capsid protein VP3; this interaction may be important for virion morphogenesis. In terms of assembly, interacts with protein 3CD. Homodimer. Interacts with host GBF1. Interacts (via GOLD domain) with host ACBD3 (via GOLD domain); this interaction allows the formation of a viral protein 3A/ACBD3 heterotetramer with a 2:2 stoichiometry, which will stimulate the recruitment of host PI4KB in order to synthesize PI4P at the viral RNA replication sites. As to quaternary structure, interacts with RNA-directed RNA polymerase. In terms of assembly, interacts with host IFIH1/MDA5; this interaction inhibits host IFIH1. Interacts with protein 3AB and with RNA-directed RNA polymerase. As to quaternary structure, interacts with Viral protein genome-linked and with protein 3CD. Mg(2+) is required as a cofactor. In terms of processing, specific enzymatic cleavages in vivo by the viral proteases yield processing intermediates and the mature proteins. Myristoylation is required for the formation of pentamers during virus assembly. Further assembly of 12 pentamers and a molecule of genomic RNA generates the provirion. Post-translationally, during virion maturation, immature virions are rendered infectious following cleavage of VP0 into VP4 and VP2. This maturation seems to be an autocatalytic event triggered by the presence of RNA in the capsid and it is followed by a conformational change infectious virion. In terms of processing, myristoylation is required during RNA encapsidation and formation of the mature virus particle. VPg is uridylylated by the polymerase into VPg-pUpU. This acts as a nucleotide-peptide primer for the genomic RNA replication.

Its subcellular location is the virion. The protein localises to the host cytoplasm. It is found in the host cytoplasmic vesicle membrane. It localises to the host nucleus. The catalysed reaction is a ribonucleoside 5'-triphosphate + H2O = a ribonucleoside 5'-diphosphate + phosphate + H(+). The enzyme catalyses Selective cleavage of Tyr-|-Gly bond in the picornavirus polyprotein.. It catalyses the reaction RNA(n) + a ribonucleoside 5'-triphosphate = RNA(n+1) + diphosphate. It carries out the reaction Selective cleavage of Gln-|-Gly bond in the poliovirus polyprotein. In other picornavirus reactions Glu may be substituted for Gln, and Ser or Thr for Gly.. Functionally, component of immature procapsids, which is cleaved into capsid proteins VP4 and VP2 after maturation. Allows the capsid to remain inactive before the maturation step. Forms an icosahedral capsid of pseudo T=3 symmetry with capsid proteins VP2 and VP3. The capsid is 300 Angstroms in diameter, composed of 60 copies of each capsid protein and enclosing the viral positive strand RNA genome. Capsid protein VP1 mainly forms the vertices of the capsid. Capsid protein VP1, together with VP3, interacts with host cell sialic acids to provide virion attachment to target host cells. This attachment induces virion internalization. After binding to its receptor, the capsid undergoes conformational changes. Capsid protein VP1 N-terminus (that contains an amphipathic alpha-helix) and capsid protein VP4 are externalized. Together, they shape a pore in the host membrane through which viral genome is translocated to host cell cytoplasm. In terms of biological role, forms an icosahedral capsid of pseudo T=3 symmetry with capsid proteins VP2 and VP3. The capsid is 300 Angstroms in diameter, composed of 60 copies of each capsid protein and enclosing the viral positive strand RNA genome. Its function is as follows. Forms an icosahedral capsid of pseudo T=3 symmetry with capsid proteins VP2 and VP3. The capsid is 300 Angstroms in diameter, composed of 60 copies of each capsid protein and enclosing the viral positive strand RNA genome. Capsid protein VP3, together with VP1, interacts with host cell sialic acids to provide virion attachment to target host cells. In addition, inhibits the phosphorylation and nuclear translocation of host IRF7 and thereby suppresses downstream interferon production. Functionally, lies on the inner surface of the capsid shell. After binding to the host receptor, the capsid undergoes conformational changes. Capsid protein VP4 is released, Capsid protein VP1 N-terminus is externalized, and together, they shape a pore in the host membrane through which the viral genome is translocated into the host cell cytoplasm. Cysteine protease that cleaves viral polyprotein and specific host proteins. It is responsible for the autocatalytic cleavage between the P1 and P2 regions, which is the first cleavage occurring in the polyprotein. Also cleaves the host translation initiation factor EIF4G1, in order to shut down the capped cellular mRNA translation. Inhibits the host nucleus-cytoplasm protein and RNA trafficking by cleaving host members of the nuclear pores. Counteracts stress granule formation probably by antagonizing its assembly or promoting its dissassembly. Also plays a role in the suppression of host innate immunity through cleavage of host TRAF3, a component of the signaling cascade required to produce type I interferons. In terms of biological role, plays an essential role in the virus replication cycle by acting as a viroporin. Creates a pore in the host endoplasmic reticulum and as a consequence releases Ca2+ in the cytoplasm of infected cell. In turn, high levels of cytoplasmic calcium may trigger membrane trafficking and transport of viral ER-associated proteins to viroplasms, sites of viral genome replication. Its function is as follows. Induces and associates with structural rearrangements of intracellular membranes. Displays RNA-binding, nucleotide binding and NTPase activities. May play a role in virion morphogenesis and viral RNA encapsidation by interacting with the capsid protein VP3. Functionally, localizes the viral replication complex to the surface of membranous vesicles. Together with protein 3CD binds the Cis-Active RNA Element (CRE) which is involved in RNA synthesis initiation. Acts as a cofactor to stimulate the activity of 3D polymerase, maybe through a nucleid acid chaperone activity. Localizes the viral replication complex to the surface of membranous vesicles. It inhibits host cell endoplasmic reticulum-to-Golgi apparatus transport and causes the disassembly of the Golgi complex, possibly through GBF1 interaction. This would result in depletion of MHC, trail receptors and IFN receptors at the host cell surface. Plays an essential role in viral RNA replication by recruiting ACBD3 and PI4KB at the viral replication sites, thereby allowing the formation of the rearranged membranous structures where viral replication takes place. In terms of biological role, acts as a primer for viral RNA replication and remains covalently bound to viral genomic RNA. VPg is uridylylated prior to priming replication into VPg-pUpU. The oriI viral genomic sequence may act as a template for this. The VPg-pUpU is then used as primer on the genomic RNA poly(A) by the RNA-dependent RNA polymerase to replicate the viral genome. During genome replication, the VPg-RNA linkage is removed by the host TDP2, thereby accelerating replication. During the late stage of the replication cycle, host TDP2 is excluded from sites of viral RNA synthesis and encapsidation, allowing for the generation of progeny virions. Its function is as follows. Involved in the viral replication complex and viral polypeptide maturation. It exhibits protease activity with a specificity and catalytic efficiency that is different from protease 3C. Protein 3CD lacks polymerase activity. Protein 3CD binds to the 5'UTR of the viral genome. Functionally, major viral protease that mediates proteolytic processing of the polyprotein. Cleaves host EIF5B, contributing to host translation shutoff. Also cleaves host PABPC1, contributing to host translation shutoff. Binds and inhibits host IFIH1/MDA5, thereby inhibiting the type-I IFN production and the establishment of the antiviral state. Cleaves host MAP3K7/TAK1, resulting in inhibition of TRAF6-triggered NF-kappa-B induction. Cleaves host TICAM1; this interaction allows the virus to disrupt host TLR3 signaling. Cleaves host IRF7, resulting in inhibition of type-I IFN production. Cleaves host NLRP1, triggers host N-glycine-mediated degradation of the autoinhibitory NLRP1 N-terminal fragment. Replicates the viral genomic RNA on the surface of intracellular membranes. May form linear arrays of subunits that propagate along a strong head-to-tail interaction called interface-I. Covalently attaches UMP to a tyrosine of VPg, which is used to prime RNA synthesis. The positive stranded RNA genome is first replicated at virus induced membranous vesicles, creating a dsRNA genomic replication form. This dsRNA is then used as template to synthesize positive stranded RNA genomes. ss(+)RNA genomes are either translated, replicated or encapsidated. In Human enterovirus D68 (EV68), this protein is Genome polyprotein.